The sequence spans 825 residues: Hypoxia-inducible factor 1-alpha (825 aa).

Residues 1–30 (MEGAGGENEKKKMSSERRKEKSRDAARSRR) form a disordered region. Positions 1–401 (MEGAGGENEK…KEPDALTLLA (401 aa)) are interaction with TSGA10. The segment covering 7-30 (ENEKKKMSSERRKEKSRDAARSRR) has biased composition (basic and acidic residues). The bHLH domain occupies 17-70 (RRKEKSRDAARSRRSKESEVFYELAHQLPLPHNVSSHLDKASVMRLTISYLRVR). The interval 21–30 (KSRDAARSRR) is DNA-binding. The 74-residue stretch at 85–158 (KAQMNCFYLK…THRNGPVRKG (74 aa)) folds into the PAS 1 domain. The segment at 170–191 (RMKCTLTSRGRTMNIKSATWKV) is required for heterodimer formation with ARNT. The PAS 2 domain maps to 228–298 (PHPSNIEIPL…KTHHDMFTKG (71 aa)). Ser-247 bears the Phosphoserine; by CK1 mark. The 44-residue stretch at 302 to 345 (TGQYRMLAKRGGYVWVETQATVIYNTKDSQPQCIVCVNYVVSGI) folds into the PAC domain. The interval 401-602 (APAAGDTIIS…STVTGFQQTQ (202 aa)) is ODD. A 4-hydroxyproline modification is found at Pro-402. Positions 492 to 516 (QIQDQPASPSDGSTRQSSPEPNSPS) are enriched in polar residues. The segment at 492-520 (QIQDQPASPSDGSTRQSSPEPNSPSEYCF) is disordered. Positions 530–574 (FKLELVEKLFAEDTEAKNPFSAQDTDLDLEMLAPYIPMDDDFQLR) are NTAD. Lys-531 bears the N6-acetyllysine; alternate mark. Lys-531 participates in a covalent cross-link: Glycyl lysine isopeptide (Lys-Gly) (interchain with G-Cter in ubiquitin); alternate. Glycyl lysine isopeptide (Lys-Gly) (interchain with G-Cter in ubiquitin) cross-links involve residues Lys-537 and Lys-546. Ser-550 carries the phosphoserine; by GSK3-beta modification. Thr-554 carries the post-translational modification Phosphothreonine; by GSK3-beta. 4-hydroxyproline is present on Pro-563. A Phosphoserine; by PLK3 modification is found at Ser-575. The segment at 575-784 (SFDQLSPLES…SDLACRLLGQ (210 aa)) is ID. Disordered stretches follow at residues 579–602 (LSPL…QQTQ) and 654–674 (AKAS…RAGK). Ser-588 bears the Phosphoserine; by GSK3-beta mark. The segment covering 654–667 (AKASAYSGTHSRTA) has biased composition (polar residues). At Ser-657 the chain carries Phosphoserine; by PLK3. The Nuclear localization signal signature appears at 717–721 (RKRKM). A CTAD region spans residues 785–825 (SMDESGLPQLTSYDCEVNAPIQGSRNLLQGEELLRALDQVN). Residue Cys-799 is modified to S-nitrosocysteine. Residue Asn-802 is modified to (3S)-3-hydroxyasparagine.

In terms of assembly, interacts with the ARNT; forms a heterodimer that binds core DNA sequence 5'-TACGTG-3' within the hypoxia response element (HRE) of target gene promoters. Interacts with COPS5; the interaction increases the transcriptional activity of HIF1A through increased stability. Interacts with EP300 (via TAZ-type 1 domains); the interaction is stimulated in response to hypoxia and inhibited by CITED2. Interacts with CREBBP (via TAZ-type 1 domains). Interacts with NCOA1, NCOA2, APEX1 and HSP90. Interacts (hydroxylated within the ODD domain) with VHLL (via beta domain); the interaction, leads to polyubiquitination and subsequent HIF1A proteasomal degradation. During hypoxia, sumoylated HIF1A also binds VHL; the interaction promotes the ubiquitination of HIF1A. Interacts with SENP1; the interaction desumoylates HIF1A resulting in stabilization and activation of transcription. Interacts (via the ODD domain) with NAA10; the interaction appears not to acetylate HIF1A nor have any affect on protein stability, during hypoxia. Interacts with RWDD3; the interaction enhances HIF1A sumoylation. Interacts with TSGA10. Interacts with HIF3A. Interacts with RORA (via the DNA binding domain); the interaction enhances HIF1A transcription under hypoxia through increasing protein stability. Interaction with PSMA7 inhibits the transactivation activity of HIF1A under both normoxic and hypoxia-mimicking conditions. Interacts with USP20. Interacts with RACK1; promotes HIF1A ubiquitination and proteasome-mediated degradation. Interacts (via N-terminus) with USP19. Interacts with SIRT2. Interacts (deacetylated form) with EGLN1. Interacts with CBFA2T3. Interacts with HSP90AA1 and HSP90AB1. Interacts with DCUN1D1; this interaction increases the interaction between VHL and DCUN1D1. Interacts with HIF1AN. Post-translationally, S-nitrosylation of Cys-799 may be responsible for increased recruitment of p300 coactivator necessary for transcriptional activity of HIF-1 complex. Acetylation of Lys-531 by ARD1 increases interaction with VHL and stimulates subsequent proteasomal degradation. Deacetylated by SIRT2 increases its interaction with and hydroxylation by EGLN1 thereby inactivating HIF1A activity by inducing its proteasomal degradation. In terms of processing, ubiquitinated; in normoxia, following hydroxylation and interaction with VHL. Lys-531 appears to be the principal site of ubiquitination. Clioquinol, the Cu/Zn-chelator, inhibits ubiquitination through preventing hydroxylation at Asn-802. Ubiquitinated by E3 ligase VHL. Deubiquitinated by UCHL1. Post-translationally, requires phosphorylation for DNA-binding. Phosphorylation at Ser-247 by CSNK1D/CK1 represses kinase activity and impairs ARNT binding. Phosphorylation by GSK3-beta and PLK3 promote degradation by the proteasome. The iron and 2-oxoglutarate dependent 3-hydroxylation of asparagine is (S) stereospecific within HIF CTAD domains. In terms of processing, sumoylated; with SUMO1 under hypoxia. Sumoylation is enhanced through interaction with RWDD3. Both sumoylation and desumoylation seem to be involved in the regulation of its stability during hypoxia. Sumoylation can promote either its stabilization or its VHL-dependent degradation by promoting hydroxyproline-independent HIF1A-VHL complex binding, thus leading to HIF1A ubiquitination and proteasomal degradation. Desumoylation by SENP1 increases its stability amd transcriptional activity. There is a disaccord between various publications on the effect of sumoylation and desumoylation on its stability and transcriptional activity. Post-translationally, in normoxia, is hydroxylated on Pro-402 and Pro-563 in the oxygen-dependent degradation domain (ODD) by EGLN1/PHD2 and EGLN2/PHD1. EGLN3/PHD3 has also been shown to hydroxylate Pro-563. The hydroxylated prolines promote interaction with VHL, initiating rapid ubiquitination and subsequent proteasomal degradation. Deubiquitinated by USP20. Under hypoxia, proline hydroxylation is impaired and ubiquitination is attenuated, resulting in stabilization. In normoxia, is hydroxylated on Asn-802 by HIF1AN, thus abrogating interaction with CREBBP and EP300 and preventing transcriptional activation. Repressed by iron ion, via Fe(2+) prolyl hydroxylase (PHD) enzymes-mediated hydroxylation and subsequent proteasomal degradation. Expressed in the kidney, higher expression is seen in the renal medulla than in the cortex. Expressed also in the perivenous zone of the liver.

Its subcellular location is the cytoplasm. It is found in the nucleus. It localises to the nucleus speckle. Its activity is regulated as follows. Induced by reactive oxygen species (ROS). In terms of biological role, functions as a master transcriptional regulator of the adaptive response to hypoxia. Under hypoxic conditions, activates the transcription of over 40 genes, including erythropoietin, glucose transporters, glycolytic enzymes, vascular endothelial growth factor, HILPDA, and other genes whose protein products increase oxygen delivery or facilitate metabolic adaptation to hypoxia. Plays an essential role in embryonic vascularization, tumor angiogenesis and pathophysiology of ischemic disease. Heterodimerizes with ARNT; heterodimer binds to core DNA sequence 5'-TACGTG-3' within the hypoxia response element (HRE) of target gene promoters. Activation requires recruitment of transcriptional coactivators such as CREBBP and EP300. Activity is enhanced by interaction with NCOA1 and/or NCOA2. Interaction with redox regulatory protein APEX1 seems to activate CTAD and potentiates activation by NCOA1 and CREBBP. Involved in the axonal distribution and transport of mitochondria in neurons during hypoxia. This chain is Hypoxia-inducible factor 1-alpha (Hif1a), found in Rattus norvegicus (Rat).